A 100-amino-acid polypeptide reads, in one-letter code: MDPIDPDLEPWKHPGSQPRTVCNNCYCKACCYHCIYCFTKKGLGISYGRKKRTTRRRTAPAGSKNNQDSIPKQPLSQSRGNKEGSEKSTKEVASKTEADQ.

The interaction with human CREBBP stretch occupies residues 1–24 (MDPIDPDLEPWKHPGSQPRTVCNN). The segment at 1-48 (MDPIDPDLEPWKHPGSQPRTVCNNCYCKACCYHCIYCFTKKGLGISYG) is transactivation. Cysteine 22, cysteine 25, and cysteine 27 together coordinate Zn(2+). The tract at residues 22–37 (CNNCYCKACCYHCIYC) is cysteine-rich. Lysine 28 bears the N6-acetyllysine; by host PCAF mark. Zn(2+) contacts are provided by cysteine 30, histidine 33, cysteine 34, and cysteine 37. A core region spans residues 38-48 (FTKKGLGISYG). A compositionally biased stretch (basic residues) spans 48-58 (GRKKRTTRRRT). The segment at 48-100 (GRKKRTTRRRTAPAGSKNNQDSIPKQPLSQSRGNKEGSEKSTKEVASKTEADQ) is disordered. Positions 49 to 57 (RKKRTTRRR) match the Nuclear localization signal, RNA-binding (TAR), and protein transduction motif. An interaction with the host capping enzyme RNGTT region spans residues 49–87 (RKKRTTRRRTAPAGSKNNQDSIPKQPLSQSRGNKEGSEK). 2 positions are modified to N6-acetyllysine; by host EP300 and GCN5L2: lysine 50 and lysine 51. Asymmetric dimethylarginine; by host PRMT6 is present on arginine 52. The segment covering 63-79 (SKNNQDSIPKQPLSQSR) has biased composition (polar residues). Lysine 72 participates in a covalent cross-link: Glycyl lysine isopeptide (Lys-Gly) (interchain with G-Cter in ubiquitin). A compositionally biased stretch (basic and acidic residues) spans 80 to 100 (GNKEGSEKSTKEVASKTEADQ).

This sequence belongs to the lentiviruses Tat family. As to quaternary structure, interacts with host CCNT1. Associates with the P-TEFb complex composed at least of Tat, P-TEFb (CDK9 and CCNT1), TAR RNA, RNA Pol II. Recruits the HATs CREBBP, TAF1/TFIID, EP300, PCAF and GCN5L2. Interacts with host KAT5/Tip60; this interaction targets the latter to degradation. Interacts with the host deacetylase SIRT1. Interacts with host capping enzyme RNGTT; this interaction stimulates RNGTT. Binds to host KDR, and to the host integrins ITGAV/ITGB3 and ITGA5/ITGB1. Interacts with host KPNB1/importin beta-1 without previous binding to KPNA1/importin alpha-1. Interacts with EIF2AK2. Interacts with host nucleosome assembly protein NAP1L1; this interaction may be required for the transport of Tat within the nucleus, since the two proteins interact at the nuclear rim. Interacts with host C1QBP/SF2P32; this interaction involves lysine-acetylated Tat. Interacts with the host chemokine receptors CCR2, CCR3 and CXCR4. Interacts with host DPP4/CD26; this interaction may trigger an anti-proliferative effect. Interacts with host LDLR. Interacts with the host extracellular matrix metalloproteinase MMP1. Interacts with host PRMT6; this interaction mediates Tat's methylation. Interacts with, and is ubiquitinated by MDM2/Hdm2. Interacts with host PSMC3 and HTATIP2. Interacts with STAB1; this interaction may overcome SATB1-mediated repression of IL2 and IL2RA (interleukin) in T cells by binding to the same domain than HDAC1. Interacts (when acetylated) with human CDK13, thereby increasing HIV-1 mRNA splicing and promoting the production of the doubly spliced HIV-1 protein Nef. Interacts with host TBP; this interaction modulates the activity of transcriptional pre-initiation complex. Interacts with host RELA. Asymmetrical arginine methylation by host PRMT6 seems to diminish the transactivation capacity of Tat and affects the interaction with host CCNT1. In terms of processing, acetylation by EP300, CREBBP, GCN5L2/GCN5 and PCAF regulates the transactivation activity of Tat. EP300-mediated acetylation of Lys-50 promotes dissociation of Tat from the TAR RNA through the competitive binding to PCAF's bromodomain. In addition, the non-acetylated Tat's N-terminus can also interact with PCAF. PCAF-mediated acetylation of Lys-28 enhances Tat's binding to CCNT1. Lys-50 is deacetylated by SIRT1. Post-translationally, polyubiquitination by host MDM2 does not target Tat to degradation, but activates its transactivation function and fosters interaction with CCNT1 and TAR RNA. Phosphorylated by EIF2AK2 on serine and threonine residues adjacent to the basic region important for TAR RNA binding and function. Phosphorylation of Tat by EIF2AK2 is dependent on the prior activation of EIF2AK2 by dsRNA.

Its subcellular location is the host nucleus. It is found in the host nucleolus. It localises to the host cytoplasm. The protein resides in the secreted. Its function is as follows. Transcriptional activator that increases RNA Pol II processivity, thereby increasing the level of full-length viral transcripts. Recognizes a hairpin structure at the 5'-LTR of the nascent viral mRNAs referred to as the transactivation responsive RNA element (TAR) and recruits the cyclin T1-CDK9 complex (P-TEFb complex) that will in turn hyperphosphorylate the RNA polymerase II to allow efficient elongation. The CDK9 component of P-TEFb and other Tat-activated kinases hyperphosphorylate the C-terminus of RNA Pol II that becomes stabilized and much more processive. Other factors such as HTATSF1/Tat-SF1, SUPT5H/SPT5, and HTATIP2 are also important for Tat's function. Besides its effect on RNA Pol II processivity, Tat induces chromatin remodeling of proviral genes by recruiting the histone acetyltransferases (HATs) CREBBP, EP300 and PCAF to the chromatin. This also contributes to the increase in proviral transcription rate, especially when the provirus integrates in transcriptionally silent region of the host genome. To ensure maximal activation of the LTR, Tat mediates nuclear translocation of NF-kappa-B by interacting with host RELA. Through its interaction with host TBP, Tat may also modulate transcription initiation. Tat can reactivate a latently infected cell by penetrating in it and transactivating its LTR promoter. In the cytoplasm, Tat is thought to act as a translational activator of HIV-1 mRNAs. Functionally, extracellular circulating Tat can be endocytosed by surrounding uninfected cells via the binding to several surface receptors such as CD26, CXCR4, heparan sulfate proteoglycans (HSPG) or LDLR. Neurons are rarely infected, but they internalize Tat via their LDLR. Through its interaction with nuclear HATs, Tat is potentially able to control the acetylation-dependent cellular gene expression. Modulates the expression of many cellular genes involved in cell survival, proliferation or in coding for cytokines or cytokine receptors. Tat plays a role in T-cell and neurons apoptosis. Tat induced neurotoxicity and apoptosis probably contribute to neuroAIDS. Circulating Tat also acts as a chemokine-like and/or growth factor-like molecule that binds to specific receptors on the surface of the cells, affecting many cellular pathways. In the vascular system, Tat binds to ITGAV/ITGB3 and ITGA5/ITGB1 integrins dimers at the surface of endothelial cells and competes with bFGF for heparin-binding sites, leading to an excess of soluble bFGF. This chain is Protein Tat, found in Pan (chimpanzees).